A 143-amino-acid polypeptide reads, in one-letter code: Transcriptional regulator MraZ (143 aa).

SpoVT-AbrB domains follow at residues 5–47 (EYSH…PMPV) and 76–119 (AMEA…SDEN).

Belongs to the MraZ family. In terms of assembly, forms oligomers.

The protein localises to the cytoplasm. The protein resides in the nucleoid. This is Transcriptional regulator MraZ from Leuconostoc citreum (strain KM20).